A 354-amino-acid chain; its full sequence is Cellular communication network factor 6 (354 aa).

The first 23 residues, 1 to 23 (MQGLLFSTLLLAGLAQFCCRVQG), serve as a signal peptide directing secretion. Residues 44–117 (RKQFCHWPCK…RYETGVCAYL (74 aa)) form the IGFBP N-terminal domain. 6 disulfide bridges follow: Cys-48-Cys-72, Cys-52-Cys-74, Cys-54-Cys-75, Cys-61-Cys-78, Cys-86-Cys-100, and Cys-92-Cys-114. N-linked (GlcNAc...) asparagine glycosylation is present at Asn-178. In terms of domain architecture, TSP type-1 spans 208 to 253 (KCLVQATKWTPCSRTCGMGISNRVTNENSNCEMRKEKRLCYIQPCD). Disulfide bonds link Cys-268/Cys-305, Cys-285/Cys-319, Cys-296/Cys-335, Cys-299/Cys-337, and Cys-304/Cys-341. Residues 268–342 (CQPTFQLSKA…TSCVCQRNCR (75 aa)) enclose the CTCK domain. A glycan (N-linked (GlcNAc...) asparagine) is linked at Asn-308.

It belongs to the CCN family. In terms of tissue distribution, predominant expression in adult kidney and testis and fetal kidney. Weaker expression found in placenta, ovary, prostate and small intestine. Also expressed in skeletally-derived cells such as synoviocytes and articular cartilage chondrocytes.

It localises to the secreted. The protein resides in the mitochondrion. In terms of biological role, plays a role in mitochondrial electron transport and mitochondrial respiration. Through its regulation of the mitochondrial function may play a role in normal postnatal skeletal growth and cartilage homeostasis. The polypeptide is Cellular communication network factor 6 (Homo sapiens (Human)).